We begin with the raw amino-acid sequence, 757 residues long: RNA-directed RNA polymerase catalytic subunit (757 aa).

The disordered stretch occupies residues 50–82 (SEKGKWTTNTETGAPQLNPIDGPLPEDNEPSGY). The segment covering 55-64 (WTTNTETGAP) has biased composition (polar residues). 2 short sequence motifs (nuclear localization signal) span residues 187-195 (RKRRVRDNM) and 203-216 (RTIG…NKRS). A promoter-binding site region spans residues 249-256 (RGFVYFVE). The region spanning 286–483 (VRKMMTNSQD…GINMTKKKSY (198 aa)) is the RdRp catalytic domain.

It belongs to the influenza viruses polymerase PB1 family. Influenza RNA polymerase is composed of three subunits: PB1, PB2 and PA. Interacts (via N-terminus) with PA (via C-terminus). Interacts (via C-terminus) with PB2 (via N-terminus); this interaction is essential for transcription initiation. Phosphorylated by host PRKCA.

The protein resides in the host nucleus. Its subcellular location is the host cytoplasm. It catalyses the reaction RNA(n) + a ribonucleoside 5'-triphosphate = RNA(n+1) + diphosphate. RNA-dependent RNA polymerase which is responsible for replication and transcription of virus RNA segments. The transcription of viral mRNAs occurs by a unique mechanism called cap-snatching. 5' methylated caps of cellular mRNAs are cleaved after 10-13 nucleotides by PA. In turn, these short capped RNAs are used as primers by PB1 for transcription of viral mRNAs. During virus replication, PB1 initiates RNA synthesis and copy vRNA into complementary RNA (cRNA) which in turn serves as a template for the production of more vRNAs. The chain is RNA-directed RNA polymerase catalytic subunit from Aves (Cat).